Reading from the N-terminus, the 257-residue chain is Glucosamine-6-phosphate deaminase (257 aa).

Asp64 functions as the Proton acceptor; for enolization step in the catalytic mechanism. Asn133 (for ring-opening step) is an active-site residue. His135 acts as the Proton acceptor; for ring-opening step in catalysis. Catalysis depends on Glu140, which acts as the For ring-opening step.

Belongs to the glucosamine/galactosamine-6-phosphate isomerase family. NagB subfamily.

It catalyses the reaction alpha-D-glucosamine 6-phosphate + H2O = beta-D-fructose 6-phosphate + NH4(+). The protein operates within amino-sugar metabolism; N-acetylneuraminate degradation; D-fructose 6-phosphate from N-acetylneuraminate: step 5/5. Catalyzes the reversible isomerization-deamination of glucosamine 6-phosphate (GlcN6P) to form fructose 6-phosphate (Fru6P) and ammonium ion. The chain is Glucosamine-6-phosphate deaminase from Corynebacterium urealyticum (strain ATCC 43042 / DSM 7109).